The primary structure comprises 226 residues: Ribonuclease 3 (226 aa).

One can recognise an RNase III domain in the interval 7–129 (LPRLCRTLGY…IIGAIYLDSD (123 aa)). E42 contributes to the Mg(2+) binding site. D46 is an active-site residue. D115 and E118 together coordinate Mg(2+). E118 is a catalytic residue. The DRBM domain maps to 156 to 226 (DAKTLLQEYL…AAQVLELLKK (71 aa)).

This sequence belongs to the ribonuclease III family. Homodimer. The cofactor is Mg(2+).

It localises to the cytoplasm. It carries out the reaction Endonucleolytic cleavage to 5'-phosphomonoester.. Its function is as follows. Digests double-stranded RNA. Involved in the processing of primary rRNA transcript to yield the immediate precursors to the large and small rRNAs (23S and 16S). Processes some mRNAs, and tRNAs when they are encoded in the rRNA operon. Processes pre-crRNA and tracrRNA of type II CRISPR loci if present in the organism. This is Ribonuclease 3 from Shewanella oneidensis (strain ATCC 700550 / JCM 31522 / CIP 106686 / LMG 19005 / NCIMB 14063 / MR-1).